Consider the following 313-residue polypeptide: Probable GTP 3',8-cyclase (313 aa).

Positions 4-224 (RFGRSIEDLR…EIRSKHYRPR (221 aa)) constitute a Radical SAM core domain. Residue arginine 13 coordinates GTP. [4Fe-4S] cluster contacts are provided by cysteine 20, cysteine 24, and cysteine 27. Lysine 60 lines the GTP pocket. Glycine 64 lines the S-adenosyl-L-methionine pocket. Threonine 90 contacts GTP. S-adenosyl-L-methionine is bound at residue serine 114. Lysine 151 is a binding site for GTP. Residues cysteine 244 and cysteine 247 each coordinate [4Fe-4S] cluster. 249–251 (RIR) serves as a coordination point for GTP. Cysteine 261 provides a ligand contact to [4Fe-4S] cluster.

Belongs to the radical SAM superfamily. MoaA family. Requires [4Fe-4S] cluster as cofactor.

The enzyme catalyses GTP + AH2 + S-adenosyl-L-methionine = (8S)-3',8-cyclo-7,8-dihydroguanosine 5'-triphosphate + 5'-deoxyadenosine + L-methionine + A + H(+). The protein operates within cofactor biosynthesis; molybdopterin biosynthesis. Functionally, catalyzes the cyclization of GTP to (8S)-3',8-cyclo-7,8-dihydroguanosine 5'-triphosphate. In Sulfurisphaera tokodaii (strain DSM 16993 / JCM 10545 / NBRC 100140 / 7) (Sulfolobus tokodaii), this protein is Probable GTP 3',8-cyclase.